We begin with the raw amino-acid sequence, 213 residues long: PRA1 family protein B2 (213 aa).

The segment at 1–21 (MSSSPAILPVTNQQAATQSQP) is disordered. The next 5 helical transmembrane spans lie at 75-94 (LAYF…AFSL), 98-117 (PFSL…LYLF), 137-157 (LLGL…GSLL), 161-181 (LTIG…DDLF), and 190-210 (AGLL…SVVA).

The protein belongs to the PRA1 family. In terms of assembly, interacts with PRA1B1, PRA1B3, PRA1B4, PRA1B5, PRA1B6 and PRA1E.

It localises to the endosome membrane. Functionally, may be involved in both secretory and endocytic intracellular trafficking in the endosomal/prevacuolar compartments. The polypeptide is PRA1 family protein B2 (PRA1B2) (Arabidopsis thaliana (Mouse-ear cress)).